Consider the following 534-residue polypeptide: 26S proteasome non-ATPase regulatory subunit 3 (534 aa).

Residues 1-16 (MKQEGSARRRGADKAK) show a composition bias toward basic and acidic residues. The segment at 1–69 (MKQEGSARRR…AEHSQRELDT (69 aa)) is disordered. A compositionally biased stretch (pro residues) spans 17–32 (PPPGGGEQEPPPPPAP). K38 is covalently cross-linked (Glycyl lysine isopeptide (Lys-Gly) (interchain with G-Cter in SUMO1); alternate). K38 is covalently cross-linked (Glycyl lysine isopeptide (Lys-Gly) (interchain with G-Cter in SUMO2); alternate). Residues 286-465 (ARYLYYTGRI…GYVQSKEMID (180 aa)) form the PCI domain. Residues S418 and S430 each carry the phosphoserine modification. The tract at residues 500-534 (SYNKDLESAEERREREQQDLEFAKEMAEDDDDSFP) is disordered. The segment covering 501 to 525 (YNKDLESAEERREREQQDLEFAKEM) has biased composition (basic and acidic residues).

It belongs to the proteasome subunit S3 family. In terms of assembly, component of the 19S proteasome regulatory particle complex. The 26S proteasome consists of a 20S core particle (CP) and two 19S regulatory subunits (RP). The regulatory particle is made of a lid composed of 9 subunits including PSMD3, a base containing 6 ATPases and few additional components. Interacts with UBQLN1 (via ubiquitin-like domain). Interacts with ERCC6.

Its function is as follows. Component of the 26S proteasome, a multiprotein complex involved in the ATP-dependent degradation of ubiquitinated proteins. This complex plays a key role in the maintenance of protein homeostasis by removing misfolded or damaged proteins, which could impair cellular functions, and by removing proteins whose functions are no longer required. Therefore, the proteasome participates in numerous cellular processes, including cell cycle progression, apoptosis, or DNA damage repair. The protein is 26S proteasome non-ATPase regulatory subunit 3 (PSMD3) of Homo sapiens (Human).